A 206-amino-acid chain; its full sequence is Protein Nef (206 aa).

Glycine 2 carries N-myristoyl glycine; by host lipidation. Serine 6 carries the phosphoserine; by host modification. The interval 62–66 is acidic; interacts with host PACS1 and PACS2; stabilizes the interaction of NEF/MHC-I with host AP1M1; necessary for MHC-I internalization; sequence EESDE. Residues 70–79 form an SH3-binding; interaction with Src family tyrosine kinases region; sequence PVRPQVPLRP. The PxxP; stabilizes the interaction of NEF/MHC-I with host AP1M1; necessary for MHC-I internalization motif lies at 73–76; the sequence is PQVP. Positions 109–125 are mediates dimerization, Nef-PTE1 interaction; sequence EILDLWVYNTQGIFPDW. Positions 149 to 181 are binding to ATP6V1H; it reads VDPQEVEEDTEGETNSLLHPICQHGMEDPERQV. The short motif at 165-166 is the Dileucine internalization motif; necessary for CD4 internalization element; that stretch reads LL. A Diacidic; necessary for CD4 internalization motif is present at residues 175 to 176; that stretch reads ED.

The protein belongs to the lentivirus primate group Nef protein family. In terms of assembly, monomer; cytosolic form. Homodimer; membrane bound form. Interacts with Nef associated p21-activated kinase (PAK2); this interaction activates PAK2. Associates with the Nef-MHC-I-AP1 complex; this complex is required for MHC-I internalization. Interacts (via C-terminus) with host PI3-kinase. Interacts with host PACS1; this interaction seems to be weak. Interacts with host PACS2. Interacts with host LCK and MAPK3; these interactions inhibit the kinase activity of the latter. Interacts with host ATP6V1H; this interaction may play a role in CD4 endocytosis. Associates with the CD4-Nef-AP2 complex; this complex is required for CD4 internalization. Interacts with host AP2 subunit alpha and AP2 subunit sigma2. Interacts with TCR-zeta chain; this interaction up-regulates the Fas ligand (FasL) surface expression. Interacts with host HCK, LYN, and SRC; these interactions activate the Src family kinases. Interacts with MAP3K5; this interaction inhibits the Fas and TNFR-mediated death signals. Interacts with beta-COP and PTE1. Interacts with human RACK1; this increases Nef phosphorylation by PKC. Interacts with TP53; this interaction decreases the half-life of TP53, protecting the infected cell against p53-mediated apoptosis. In terms of processing, the virion-associated Nef proteins are cleaved by the viral protease to release the soluble C-terminal core protein. Nef is probably cleaved concomitantly with viral structural proteins on maturation of virus particles. Post-translationally, myristoylated. Phosphorylated on serine residues, probably by host PKCdelta and theta.

Its subcellular location is the host cell membrane. It localises to the virion. It is found in the secreted. The protein resides in the host Golgi apparatus membrane. Factor of infectivity and pathogenicity, required for optimal virus replication. Alters numerous pathways of T-lymphocyte function and down-regulates immunity surface molecules in order to evade host defense and increase viral infectivity. Alters the functionality of other immunity cells, like dendritic cells, monocytes/macrophages and NK cells. In terms of biological role, in infected CD4(+) T-lymphocytes, down-regulates the surface MHC-I, mature MHC-II, CD4, CD28, CCR5 and CXCR4 molecules. Mediates internalization and degradation of host CD4 through the interaction of with the cytoplasmic tail of CD4, the recruitment of AP-2 (clathrin adapter protein complex 2), internalization through clathrin coated pits, and subsequent transport to endosomes and lysosomes for degradation. Diverts host MHC-I molecules to the trans-Golgi network-associated endosomal compartments by an endocytic pathway to finally target them for degradation. MHC-I down-regulation may involve AP-1 (clathrin adapter protein complex 1) or possibly Src family kinase-ZAP70/Syk-PI3K cascade recruited by PACS2. In consequence infected cells are masked for immune recognition by cytotoxic T-lymphocytes. Decreasing the number of immune receptors also prevents reinfection by more HIV particles (superinfection). Down-regulates host SERINC3 and SERINC5 thereby excluding these proteins from the viral particles. Virion infectivity is drastically higher when SERINC3 or SERINC5 are excluded from the viral envelope, because these host antiviral proteins impair the membrane fusion event necessary for subsequent virion penetration. Functionally, bypasses host T-cell signaling by inducing a transcriptional program nearly identical to that of anti-CD3 cell activation. Interaction with TCR-zeta chain up-regulates the Fas ligand (FasL). Increasing surface FasL molecules and decreasing surface MHC-I molecules on infected CD4(+) cells send attacking cytotoxic CD8+ T-lymphocytes into apoptosis. Its function is as follows. Plays a role in optimizing the host cell environment for viral replication without causing cell death by apoptosis. Protects the infected cells from apoptosis in order to keep them alive until the next virus generation is ready to strike. Inhibits the Fas and TNFR-mediated death signals by blocking MAP3K5/ASK1. Decreases the half-life of TP53, protecting the infected cell against p53-mediated apoptosis. Inhibits the apoptotic signals regulated by the Bcl-2 family proteins through the formation of a Nef/PI3-kinase/PAK2 complex that leads to activation of PAK2 and induces phosphorylation of host BAD. Extracellular Nef protein targets CD4(+) T-lymphocytes for apoptosis by interacting with CXCR4 surface receptors. In Homo sapiens (Human), this protein is Protein Nef.